A 406-amino-acid polypeptide reads, in one-letter code: telomere-associated protein 1 (406 aa).

Residues 20 to 40 (EHHNGSHDNDDKDKEDKEKQN) show a composition bias toward basic and acidic residues. The tract at residues 20–46 (EHHNGSHDNDDKDKEDKEKQNTEAVAA) is disordered. Positions 147 to 206 (TTRRVRLRWTQEETADLMEGCKVHGVGNWKKILTDPRFRFNNRTAVDLKDRFRTCFPEDY) constitute an HTH myb-type domain. The H-T-H motif DNA-binding region spans 175–202 (WKKILTDPRFRFNNRTAVDLKDRFRTCF). Residues 234–288 (VNRKERRVFTPEEDERLLNGFMKHGPSWSNIQRDNELGLFERRSTDLRDRFRNAF) enclose the Myb-like domain. Residues 368–389 (TQELQPQAHSRKQQGGDGLKEE) form a disordered region.

It is found in the nucleus. The protein localises to the chromosome. It localises to the telomere. Functionally, telomere-binding protein that mediates telomere clustering by promoting formation of head-to-head dimers of DNA molecules through the telomeric tracts. Binds specifically 5'-TTAGTCAGGG-3' repeats in subtelomeric regions. In Yarrowia lipolytica (strain CLIB 122 / E 150) (Yeast), this protein is telomere-associated protein 1.